Reading from the N-terminus, the 329-residue chain is Biotin synthase (329 aa).

The Radical SAM core domain maps to 38–262 (NTIQVSTLLS…IMPYSYIRLS (225 aa)). The [4Fe-4S] cluster site is built by C53, C57, and C60. Residues C97, C128, C188, and R260 each contribute to the [2Fe-2S] cluster site.

This sequence belongs to the radical SAM superfamily. Biotin synthase family. In terms of assembly, homodimer. Requires [4Fe-4S] cluster as cofactor. [2Fe-2S] cluster is required as a cofactor.

It catalyses the reaction (4R,5S)-dethiobiotin + (sulfur carrier)-SH + 2 reduced [2Fe-2S]-[ferredoxin] + 2 S-adenosyl-L-methionine = (sulfur carrier)-H + biotin + 2 5'-deoxyadenosine + 2 L-methionine + 2 oxidized [2Fe-2S]-[ferredoxin]. Its pathway is cofactor biosynthesis; biotin biosynthesis; biotin from 7,8-diaminononanoate: step 2/2. In terms of biological role, catalyzes the conversion of dethiobiotin (DTB) to biotin by the insertion of a sulfur atom into dethiobiotin via a radical-based mechanism. The chain is Biotin synthase from Acinetobacter baylyi (strain ATCC 33305 / BD413 / ADP1).